A 234-amino-acid chain; its full sequence is MAERGYSFSLTTFSPSGKLVQIEYALAAVAGGAPSVGIKAANGVVLATEKKQKSILYDERSVHKVEPITKHIGLVYSGMGPDYRVLVHRARKLAQQYYLVYQEPIPTAQLVQRVASVMQEYTQSGGVRPFGVSLLICGWNEGRPYLFQSDPSGAYFAWKATAMGKNYVNGKTFLEKRYNEDLELEDAIHTAILTLKESFEGQMTEDNIEVGICNEAGFRRLTPTEVRDYLAAIA.

Alanine 2 is modified (N-acetylalanine). The residue at position 6 (tyrosine 6) is a Phosphotyrosine. Serine 7, serine 14, and serine 16 each carry phosphoserine. Position 24 is a phosphotyrosine (tyrosine 24). Lysine 70 is subject to N6-acetyllysine. Phosphotyrosine occurs at positions 76 and 121. Lysine 171 carries the N6-acetyllysine modification.

Belongs to the peptidase T1A family. In terms of assembly, the 26S proteasome consists of a 20S proteasome core and two 19S regulatory subunits. The 20S proteasome core is a barrel-shaped complex made of 28 subunits that are arranged in four stacked rings. The two outer rings are each formed by seven alpha subunits, and the two inner rings are formed by seven beta subunits. The proteolytic activity is exerted by three beta-subunits PSMB5, PSMB6 and PSMB7. In terms of processing, phosphorylated on tyrosine residues; which may be important for nuclear import. As to expression, detected in liver (at protein level).

The protein localises to the cytoplasm. It localises to the nucleus. Its function is as follows. Component of the 20S core proteasome complex involved in the proteolytic degradation of most intracellular proteins. This complex plays numerous essential roles within the cell by associating with different regulatory particles. Associated with two 19S regulatory particles, forms the 26S proteasome and thus participates in the ATP-dependent degradation of ubiquitinated proteins. The 26S proteasome plays a key role in the maintenance of protein homeostasis by removing misfolded or damaged proteins that could impair cellular functions, and by removing proteins whose functions are no longer required. Associated with the PA200 or PA28, the 20S proteasome mediates ubiquitin-independent protein degradation. This type of proteolysis is required in several pathways including spermatogenesis (20S-PA200 complex) or generation of a subset of MHC class I-presented antigenic peptides (20S-PA28 complex). The protein is Proteasome subunit alpha type-2 (Psma2) of Mus musculus (Mouse).